A 672-amino-acid chain; its full sequence is Putative per-hexamer repeat protein 5 (672 aa).

Gly residues-rich tracts occupy residues 141–161 (TGTGTGTGTGTGTGTGTGTGT), 171–191 (TDRGTGTGTGTGTGTGTGTGT), 215–233 (TGTGTGTGTGTGTGTGTDT), 243–263 (TGTGTGTGTGTGTGTGTGTGT), 273–295 (TDRGTGTGTGTGTGTGTGTGTGT), 303–355 (TGTG…GSGS), and 365–389 (TGTGTGTDTGTGTGTGTGTGTGSGS). Disordered regions lie at residues 141-193 (TGTG…GTGT) and 213-672 (TGTG…TGTA). Over residues 390–424 (GTAKVTGTATTTATVTETGTAKVTGTDTGTAKVTG) the composition is skewed to low complexity. Residues 425–469 (TGTGTGTGTGTGTGTGTGTGTGTGTGTGTGTGTGTGTGTGTGSGS) show a composition bias toward gly residues. Over residues 470–486 (GTAKVTGTDTGTAKVTG) the composition is skewed to low complexity. Positions 487 to 537 (TGTGTGTGTGTGTGTGTGTGTGTGSGSGSGSGSGSGSGTGTGTGLGSGSGS) are enriched in gly residues. Over residues 538–552 (GTAKVTGTGTAKVTG) the composition is skewed to low complexity. A compositionally biased stretch (gly residues) spans 553–617 (TGTGTGTGTG…GTGTGTGTGT (65 aa)). The span at 618–636 (GTSTVTVRGTGTGTATATG) shows a compositional bias: low complexity. 2 stretches are compositionally biased toward gly residues: residues 637-653 (TGTGTGTGTGTGTGTGT) and 663-672 (RGTGTGTGTA).

The protein is Putative per-hexamer repeat protein 5 (Phxr5) of Mus musculus (Mouse).